Here is a 206-residue protein sequence, read N- to C-terminus: Glycerol-3-phosphate acyltransferase (206 aa).

5 consecutive transmembrane segments (helical) span residues 3-23, 47-67, 79-99, 119-139, and 152-172; these read LSLIFILAYLIGSFPSGVIIG, VLGPIAGTAVLFLDILKGTLA, HSLVLVVGLAAVIGHAYSIFL, PLFFVIASTIFISVILITSMV, and ILSFYTHDWLLGTIATLVLIF.

Belongs to the PlsY family. As to quaternary structure, probably interacts with PlsX.

It localises to the cell membrane. The catalysed reaction is an acyl phosphate + sn-glycerol 3-phosphate = a 1-acyl-sn-glycero-3-phosphate + phosphate. Its pathway is lipid metabolism; phospholipid metabolism. Its function is as follows. Catalyzes the transfer of an acyl group from acyl-phosphate (acyl-PO(4)) to glycerol-3-phosphate (G3P) to form lysophosphatidic acid (LPA). This enzyme utilizes acyl-phosphate as fatty acyl donor, but not acyl-CoA or acyl-ACP. The protein is Glycerol-3-phosphate acyltransferase of Latilactobacillus sakei subsp. sakei (strain 23K) (Lactobacillus sakei subsp. sakei).